A 376-amino-acid chain; its full sequence is Putative glutamate--cysteine ligase 2 (376 aa).

Belongs to the glutamate--cysteine ligase type 2 family. YbdK subfamily.

The catalysed reaction is L-cysteine + L-glutamate + ATP = gamma-L-glutamyl-L-cysteine + ADP + phosphate + H(+). In terms of biological role, ATP-dependent carboxylate-amine ligase which exhibits weak glutamate--cysteine ligase activity. The sequence is that of Putative glutamate--cysteine ligase 2 from Corynebacterium glutamicum (strain R).